Consider the following 210-residue polypeptide: Chaperone protein TorD (210 aa).

It belongs to the TorD/DmsD family. TorD subfamily.

It is found in the cytoplasm. Functionally, involved in the biogenesis of TorA. Acts on TorA before the insertion of the molybdenum cofactor and, as a result, probably favors a conformation of the apoenzyme that is competent for acquiring the cofactor. In Salmonella dublin (strain CT_02021853), this protein is Chaperone protein TorD.